Consider the following 79-residue polypeptide: Darcynin (79 aa).

The protein belongs to the darcynin family.

The polypeptide is Darcynin (Chromobacterium violaceum (strain ATCC 12472 / DSM 30191 / JCM 1249 / CCUG 213 / NBRC 12614 / NCIMB 9131 / NCTC 9757 / MK)).